We begin with the raw amino-acid sequence, 292 residues long: MPWLQVRLAITPEQAETFEDALLEVGAVSVTFMDAEDQPIFEPDLGTTPLWSHTHLLALFEADTDETALIAHLQLLCGGTLPEHHVERIEDQDWERSWMDNFQPMRFGQRLWIVPSWHAAPEPDAVNLLLDPGLAFGTGTHPTTALCLEWLDGQNLDGCRVLDFGCGSGILAIAALLLGAPQAVGTDIDPQALEASRDNANRNGIDPARFPVYLPADLPQQPAEVVVANILAGPLVSLAPQITALVQEGGRLALSGILAEQAEEVRAAYAGAFDLDPTAIKDGWVRISGVKR.

Residues Thr144, Gly165, Asp187, and Asn229 each coordinate S-adenosyl-L-methionine.

Belongs to the methyltransferase superfamily. PrmA family.

The protein localises to the cytoplasm. The enzyme catalyses L-lysyl-[protein] + 3 S-adenosyl-L-methionine = N(6),N(6),N(6)-trimethyl-L-lysyl-[protein] + 3 S-adenosyl-L-homocysteine + 3 H(+). Its function is as follows. Methylates ribosomal protein L11. This chain is Ribosomal protein L11 methyltransferase, found in Ectopseudomonas mendocina (strain ymp) (Pseudomonas mendocina).